The following is a 96-amino-acid chain: Co-chaperonin GroES (96 aa).

This sequence belongs to the GroES chaperonin family. As to quaternary structure, heptamer of 7 subunits arranged in a ring. Interacts with the chaperonin GroEL.

Its subcellular location is the cytoplasm. In terms of biological role, together with the chaperonin GroEL, plays an essential role in assisting protein folding. The GroEL-GroES system forms a nano-cage that allows encapsulation of the non-native substrate proteins and provides a physical environment optimized to promote and accelerate protein folding. GroES binds to the apical surface of the GroEL ring, thereby capping the opening of the GroEL channel. The polypeptide is Co-chaperonin GroES (Haemophilus influenzae (strain PittGG)).